The primary structure comprises 543 residues: Probable malate:quinone oxidoreductase (543 aa).

Belongs to the MQO family. Requires FAD as cofactor.

It carries out the reaction (S)-malate + a quinone = a quinol + oxaloacetate. Its pathway is carbohydrate metabolism; tricarboxylic acid cycle; oxaloacetate from (S)-malate (quinone route): step 1/1. The chain is Probable malate:quinone oxidoreductase from Acinetobacter baylyi (strain ATCC 33305 / BD413 / ADP1).